The chain runs to 517 residues: Shugoshin 1 (517 aa).

Residues 1–89 (MAKERCQKRS…DVILQLRKEC (89 aa)) adopt a coiled-coil conformation. The tract at residues 1–176 (MAKERCQKRS…DFDSGKVEST (176 aa)) is necessary for interaction with PPP2CA and PPP2R1A. Disordered stretches follow at residues 107-136 (QSEETTQNWKGRPSDVVSSIDNTTRDLSGK), 149-173 (PYQTTEPSPAVTPETQGCDFDSGKV), 267-317 (PEQI…TLDG), and 334-427 (HPTP…QESP). A coiled-coil region spans residues 268–291 (EQIESKHKRARKRRAEQRRTKQRC). The span at 273 to 302 (KHKRARKRRAEQRRTKQRCKSKSSLRSKGN) shows a compositional bias: basic residues. Polar residues predominate over residues 341–363 (KMNNGCNKETDSSNSEVSDLECS). Positions 379–390 (RLRDYRESERAV) are enriched in basic and acidic residues. Serine 426 is modified (phosphoserine). The PXVXL/I motif signature appears at 441 to 445 (PRVKI). Positions 447 to 455 (KPSLPPKRR) match the D-box motif. A Phosphoserine; by NEK2 modification is found at serine 497.

Belongs to the shugoshin family. As to quaternary structure, interacts with PPP2CA (or PPP2CB), PPP2R1B, PPP2R5A, PPP2R5B, PPP2R5C, PPP2R5D, PPP2R5E, SET, LRRC59, RBM10 (or RBM5), RPL10A, RPL28, RPL7, RPL7A and RPLP1. Interaction with protein phosphatase 2A occurs most probably through direct binding to the regulatory B56 subunits: PPP2R1B, PPP2R5A, PPP2R5B, PPP2R5C, PPP2R5D, PPP2R5E. Interacts with PPP2R1A and NEK2. Interacts with CDCA8. Post-translationally, ubiquitinated and degraded during mitotic exit by APC/C-Cdh1. In terms of processing, phosphorylation by NEK2 is essential for chromosome congression in mitosis and for the proper attachment of spindle microtubule to the kinetochore. Phosphorylated by PLK1 and AUKRB. Ubiquitously expressed in proliferating cells. Moderately expressed in the oocytes.

It is found in the nucleus. The protein localises to the chromosome. Its subcellular location is the centromere. The protein resides in the kinetochore. It localises to the cytoplasm. It is found in the cytoskeleton. The protein localises to the spindle pole. Its subcellular location is the microtubule organizing center. The protein resides in the centrosome. It localises to the nucleus speckle. Plays a central role in chromosome cohesion during mitosis by preventing premature dissociation of cohesin complex from centromeres after prophase, when most of cohesin complex dissociates from chromosomes arms. May act by preventing phosphorylation of the STAG2 subunit of cohesin complex at the centromere, ensuring cohesin persistence at centromere until cohesin cleavage by ESPL1/separase at anaphase. Essential for proper chromosome segregation during mitosis and this function requires interaction with PPP2R1A. Its phosphorylated form is necessary for chromosome congression and for the proper attachment of spindle microtubule to the kinetochore. Necessary for kinetochore localization of PLK1 and CENPF. May play a role in the tension sensing mechanism of the spindle-assembly checkpoint by regulating PLK1 kinetochore affinity. Involved in centromeric enrichment of AUKRB in prometaphase. The sequence is that of Shugoshin 1 from Mus musculus (Mouse).